We begin with the raw amino-acid sequence, 796 residues long: Probable phosphoketolase (796 aa).

This sequence belongs to the XFP family. Requires thiamine diphosphate as cofactor.

In Clostridium acetobutylicum (strain ATCC 824 / DSM 792 / JCM 1419 / IAM 19013 / LMG 5710 / NBRC 13948 / NRRL B-527 / VKM B-1787 / 2291 / W), this protein is Probable phosphoketolase.